A 637-amino-acid polypeptide reads, in one-letter code: Poly(A) polymerase beta (637 aa).

The segment covering Met-1–Gly-10 has biased composition (low complexity). A disordered region spans residues Met-1–Val-23. ATP-binding positions include Phe-101 to Ser-103, Thr-110, Asp-114 to Asp-116, Asp-168, Lys-229, Tyr-238, and Gly-247 to Val-248. Mg(2+) is bound by residues Asp-114, Asp-116, and Asp-168. The segment at Ser-535–Arg-555 is disordered.

It belongs to the poly(A) polymerase family. In terms of assembly, interacts with GSG1. The cofactor is Mg(2+). Requires Mn(2+) as cofactor. Testis specific.

Its subcellular location is the nucleus. The enzyme catalyses RNA(n) + ATP = RNA(n)-3'-adenine ribonucleotide + diphosphate. The sequence is that of Poly(A) polymerase beta from Homo sapiens (Human).